A 354-amino-acid chain; its full sequence is Protein-arginine kinase (354 aa).

Residues 24 to 254 (IVLSSRIRLA…QQIIQQEKMA (231 aa)) enclose the Phosphagen kinase C-terminal domain. Residues 27–31 (SSRIR), His-92, Arg-125, 176–180 (RASVM), and 207–212 (RGIYGE) each bind ATP. The short motif at 337–342 (RDYRRA) is the RDXXRA motif of the pArg binding pocket involved in allosteric regulation element.

Belongs to the ATP:guanido phosphotransferase family.

It carries out the reaction L-arginyl-[protein] + ATP = N(omega)-phospho-L-arginyl-[protein] + ADP + H(+). With respect to regulation, appears to be allosterically activated by the binding of pArg-containing polypeptides to the pArg-binding pocket localized in the C-terminal domain of McsB. Catalyzes the specific phosphorylation of arginine residues in a large number of proteins. Is part of the bacterial stress response system. Protein arginine phosphorylation has a physiologically important role and is involved in the regulation of many critical cellular processes, such as protein homeostasis, motility, competence, and stringent and stress responses, by regulating gene expression and protein activity. In Bacillus cereus (strain AH187), this protein is Protein-arginine kinase.